The sequence spans 319 residues: Large ribosomal subunit protein uL10 (319 aa).

Residues 286–319 form a disordered region; the sequence is AGDSGASAAPKEEEKAAEPEEESDEEMGFSLFDD. Residues 304–319 show a composition bias toward acidic residues; it reads PEEESDEEMGFSLFDD.

Belongs to the universal ribosomal protein uL10 family. P0 forms a pentameric complex by interaction with dimers of P1 and P2. In terms of processing, phosphorylated.

In terms of biological role, ribosomal protein P0 is the functional equivalent of E.coli protein L10. This is Large ribosomal subunit protein uL10 (RP-P0) from Zea mays (Maize).